The following is a 319-amino-acid chain: ATP-dependent 6-phosphofructokinase (319 aa).

G11 lines the ATP pocket. 21–25 contacts ADP; it reads RAVVR. Residues 72–73 and 102–105 each bind ATP; these read RC and GDGS. D103 contributes to the Mg(2+) binding site. 125–127 is a binding site for substrate; that stretch reads TID. The active-site Proton acceptor is the D127. R154 contacts ADP. Substrate contacts are provided by residues R162 and 169 to 171; that span reads MGR. ADP contacts are provided by residues 185–187, R211, and 213–215; these read GAE and KKH. Substrate contacts are provided by residues E222, R243, and 249 to 252; that span reads HVQR.

It belongs to the phosphofructokinase type A (PFKA) family. ATP-dependent PFK group I subfamily. Prokaryotic clade 'B1' sub-subfamily. In terms of assembly, homotetramer. Mg(2+) is required as a cofactor.

Its subcellular location is the cytoplasm. It carries out the reaction beta-D-fructose 6-phosphate + ATP = beta-D-fructose 1,6-bisphosphate + ADP + H(+). The protein operates within carbohydrate degradation; glycolysis; D-glyceraldehyde 3-phosphate and glycerone phosphate from D-glucose: step 3/4. Its activity is regulated as follows. Allosterically activated by ADP and other diphosphonucleosides, and allosterically inhibited by phosphoenolpyruvate. Catalyzes the phosphorylation of D-fructose 6-phosphate to fructose 1,6-bisphosphate by ATP, the first committing step of glycolysis. This chain is ATP-dependent 6-phosphofructokinase, found in Bacillus cytotoxicus (strain DSM 22905 / CIP 110041 / 391-98 / NVH 391-98).